A 460-amino-acid chain; its full sequence is tRNA-splicing endonuclease subunit Sen2 (460 aa).

The segment at 143–215 (EKEETPQHEP…SPSSHNGHVA (73 aa)) is disordered. Basic and acidic residues predominate over residues 159 to 170 (SSLEGRVEKDEL). Active-site residues include Tyr364 and His372. Residues Ser403, Ser406, and Ser410 each carry the phosphoserine modification. Residue Lys411 is part of the active site.

It belongs to the tRNA-intron endonuclease family. In terms of assembly, tRNA splicing endonuclease is a heterotetramer composed of TSEN2, TSEN15, TSEN34/LENG5 and TSEN54. tRNA splicing endonuclease complex also contains proteins of the pre-mRNA 3'-end processing machinery such as CLP1, CPSF1, CPSF4 and CSTF2.

The protein localises to the nucleus. Its subcellular location is the nucleolus. It carries out the reaction pretRNA = a 3'-half-tRNA molecule with a 5'-OH end + a 5'-half-tRNA molecule with a 2',3'-cyclic phosphate end + an intron with a 2',3'-cyclic phosphate and a 5'-hydroxyl terminus.. Constitutes one of the two catalytic subunit of the tRNA-splicing endonuclease complex, a complex responsible for identification and cleavage of the splice sites in pre-tRNA. It cleaves pre-tRNA at the 5'- and 3'-splice sites to release the intron. The products are an intron and two tRNA half-molecules bearing 2',3'-cyclic phosphate and 5'-OH termini. There are no conserved sequences at the splice sites, but the intron is invariably located at the same site in the gene, placing the splice sites an invariant distance from the constant structural features of the tRNA body. Probably carries the active site for 5'-splice site cleavage. The tRNA splicing endonuclease is also involved in mRNA processing via its association with pre-mRNA 3'-end processing factors, establishing a link between pre-tRNA splicing and pre-mRNA 3'-end formation, suggesting that the endonuclease subunits function in multiple RNA-processing events. This Mus musculus (Mouse) protein is tRNA-splicing endonuclease subunit Sen2 (Tsen2).